The following is a 102-amino-acid chain: Aspartyl/glutamyl-tRNA(Asn/Gln) amidotransferase subunit C (102 aa).

It belongs to the GatC family. In terms of assembly, heterotrimer of A, B and C subunits.

The enzyme catalyses L-glutamyl-tRNA(Gln) + L-glutamine + ATP + H2O = L-glutaminyl-tRNA(Gln) + L-glutamate + ADP + phosphate + H(+). It carries out the reaction L-aspartyl-tRNA(Asn) + L-glutamine + ATP + H2O = L-asparaginyl-tRNA(Asn) + L-glutamate + ADP + phosphate + 2 H(+). Its function is as follows. Allows the formation of correctly charged Asn-tRNA(Asn) or Gln-tRNA(Gln) through the transamidation of misacylated Asp-tRNA(Asn) or Glu-tRNA(Gln) in organisms which lack either or both of asparaginyl-tRNA or glutaminyl-tRNA synthetases. The reaction takes place in the presence of glutamine and ATP through an activated phospho-Asp-tRNA(Asn) or phospho-Glu-tRNA(Gln). This Bordetella pertussis (strain Tohama I / ATCC BAA-589 / NCTC 13251) protein is Aspartyl/glutamyl-tRNA(Asn/Gln) amidotransferase subunit C.